A 130-amino-acid polypeptide reads, in one-letter code: uncharacterized protein (130 aa).

Asparagine 102 carries N-linked (GlcNAc...) asparagine glycosylation. The helical transmembrane segment at 110–130 (DPLAFYLMFLIIITILLIMIL) threads the bilayer.

It is found in the membrane. This is an uncharacterized protein from Dictyostelium discoideum (Social amoeba).